The primary structure comprises 285 residues: NADPH-dependent 7-cyano-7-deazaguanine reductase (285 aa).

Residue 91–93 participates in substrate binding; the sequence is IES. Residue 93–94 coordinates NADPH; the sequence is SK. The active-site Thioimide intermediate is the C191. The active-site Proton donor is D198. Residue 230 to 231 participates in substrate binding; that stretch reads HE. 259-260 contributes to the NADPH binding site; sequence RG.

This sequence belongs to the GTP cyclohydrolase I family. QueF type 2 subfamily. As to quaternary structure, homodimer.

The protein resides in the cytoplasm. The catalysed reaction is 7-aminomethyl-7-carbaguanine + 2 NADP(+) = 7-cyano-7-deazaguanine + 2 NADPH + 3 H(+). The protein operates within tRNA modification; tRNA-queuosine biosynthesis. Catalyzes the NADPH-dependent reduction of 7-cyano-7-deazaguanine (preQ0) to 7-aminomethyl-7-deazaguanine (preQ1). The sequence is that of NADPH-dependent 7-cyano-7-deazaguanine reductase from Legionella pneumophila (strain Paris).